The following is a 566-amino-acid chain: Proline--tRNA ligase (566 aa).

This sequence belongs to the class-II aminoacyl-tRNA synthetase family. ProS type 1 subfamily. Homodimer.

It is found in the cytoplasm. The catalysed reaction is tRNA(Pro) + L-proline + ATP = L-prolyl-tRNA(Pro) + AMP + diphosphate. Catalyzes the attachment of proline to tRNA(Pro) in a two-step reaction: proline is first activated by ATP to form Pro-AMP and then transferred to the acceptor end of tRNA(Pro). As ProRS can inadvertently accommodate and process non-cognate amino acids such as alanine and cysteine, to avoid such errors it has two additional distinct editing activities against alanine. One activity is designated as 'pretransfer' editing and involves the tRNA(Pro)-independent hydrolysis of activated Ala-AMP. The other activity is designated 'posttransfer' editing and involves deacylation of mischarged Ala-tRNA(Pro). The misacylated Cys-tRNA(Pro) is not edited by ProRS. This Bacillus cytotoxicus (strain DSM 22905 / CIP 110041 / 391-98 / NVH 391-98) protein is Proline--tRNA ligase.